A 563-amino-acid polypeptide reads, in one-letter code: TSET complex member tstC (563 aa).

5 disordered regions span residues 146-170, 192-213, 235-298, 376-395, and 428-563; these read SPHQPPHYNTHHHTSTPSVAPSFIT, NSLSNSISNSNSNNNNNNNNDS, VLNS…NYNN, HPNAGKEAKEKEKEKENEFK, and GSAS…FLNF. The span at 379–395 shows a compositional bias: basic and acidic residues; the sequence is AGKEAKEKEKEKENEFK. Low complexity predominate over residues 428–459; that stretch reads GSASSKSSPSTSPLSSSYNPSSPETSENSFSA. Polar residues predominate over residues 460–473; sequence TPISDSNSLKNSID. Composition is skewed to low complexity over residues 474-487 and 507-543; these read NNNNNNNNNNNNNN and NNSKSSLSTSNSNISTPDNGASSPLASSTSGSASSAA. Residues 552–563 are compositionally biased toward polar residues; sequence NSAKTKMNFLNF.

As to quaternary structure, component of the TSET complex, a heterohexamer composed of tstA, tstB, tstC, tstD, tstE and tstF, which may act in plasma membrane turnover. tstA, tstB, tstC and tstD are likely to be the core complex members with tstE and tstF acting as associated scaffold proteins.

The chain is TSET complex member tstC from Dictyostelium discoideum (Social amoeba).